The sequence spans 907 residues: MLNLVQKIIGSRNDRFIKKVSKTVQKINSLEPEFEKLSDQELKAKTQEYKDRVAKGEALDNLLPEAFATVREAGKRTKNMRHYDVQLIGGIVLHQGKVAEMRTGEGKTLVATLPAYLNALTGNGVHVITVNDYLAKRDAELMSDIYEFLGLSVGVIVADLNPEQRRESYACDITYGTNNEFGFDYLRDNMAYDKEQQVQRSRNYVIIDEVDSILIDEARTPLIISGASDDSSEMYNLFNRLVPFLEKQEKEELDEDQEQKDFYVDEKSKNAYLTEKGYAKIESMLKKEGILEEDDNLYSPHNITKMHYLNACLRAHSLYQLNIDYIVRDQEIVIIDESTGRAMPGRRWSDGLHQAIEAKEGVKINAENQTMASITFQNFFKLYNKIAGMTGTADTEAFELHSIYGLEVIIIPTNKPLIRKDHHDEIYGSVREKFDAIVEDIKQRISKGQPVLVGTASIEASEVLSTLLKKKKIRHNVLNAKQHEKEASIIAMAGYPGNVTIATNMAGRGTDIILGGNLEVEIAQLEDPTPEEVAQIKAEWVKRNEVVKNAGGLCIIGSERHDSRRIDNQLRGRAARQGDPGESKFYLSMDDNLLRIFASQSMAERVKKGLKGGESLAFGFMSKVISKAQGKVESYHFDIRKNLLEYDNVVNTQRKVIYEQRQAFLDSDDVSEILADIRIDVAEQLFHDYVPAGSMHELWDLEGLEKALKSDFMIEIDLQKLYEEDDNLGEEDLKKFVREAIEFEFAEKTKNLEVGAVRQFEKFSLLQSLDSHWREHLSSIDHLRNSINLRGYAQKDPKNEYKKEAFELFSTMLDNFKYEVISSLAKIRIATEEETQRAQEEWKESMSEIKAEHESVIDNNQSEDDKEQEEAPKVQQVKREGPKIKRNDPCPCGSGKKYKQCHGKVVD.

Residues Gln86, 104 to 108, and Asp511 each bind ATP; that span reads GEGKT. Basic and acidic residues-rich tracts occupy residues 838–856 and 869–888; these read AQEE…HESV and EEAP…KRND. The tract at residues 838 to 907 is disordered; sequence AQEEWKESMS…YKQCHGKVVD (70 aa). Zn(2+) contacts are provided by Cys890, Cys892, Cys901, and His902. Positions 896 to 907 are enriched in basic residues; it reads KKYKQCHGKVVD.

It belongs to the SecA family. As to quaternary structure, monomer and homodimer. Part of the essential Sec protein translocation apparatus which comprises SecA, SecYEG and auxiliary proteins SecDF-YajC and YidC. It depends on Zn(2+) as a cofactor.

It localises to the cell inner membrane. Its subcellular location is the cytoplasm. The catalysed reaction is ATP + H2O + cellular proteinSide 1 = ADP + phosphate + cellular proteinSide 2.. Part of the Sec protein translocase complex. Interacts with the SecYEG preprotein conducting channel. Has a central role in coupling the hydrolysis of ATP to the transfer of proteins into and across the cell membrane, serving both as a receptor for the preprotein-SecB complex and as an ATP-driven molecular motor driving the stepwise translocation of polypeptide chains across the membrane. The polypeptide is Protein translocase subunit SecA (Francisella philomiragia subsp. philomiragia (strain ATCC 25017 / CCUG 19701 / FSC 153 / O#319-036)).